Here is a 141-residue protein sequence, read N- to C-terminus: Large ribosomal subunit protein uL16 (141 aa).

It belongs to the universal ribosomal protein uL16 family. In terms of assembly, part of the 50S ribosomal subunit.

Its function is as follows. Binds 23S rRNA and is also seen to make contacts with the A and possibly P site tRNAs. The chain is Large ribosomal subunit protein uL16 from Campylobacter fetus subsp. fetus (strain 82-40).